Here is a 142-residue protein sequence, read N- to C-terminus: Large ribosomal subunit protein uL11 (142 aa).

It belongs to the universal ribosomal protein uL11 family. Part of the ribosomal stalk of the 50S ribosomal subunit. Interacts with L10 and the large rRNA to form the base of the stalk. L10 forms an elongated spine to which L12 dimers bind in a sequential fashion forming a multimeric L10(L12)X complex. Post-translationally, one or more lysine residues are methylated.

Functionally, forms part of the ribosomal stalk which helps the ribosome interact with GTP-bound translation factors. The protein is Large ribosomal subunit protein uL11 of Erwinia tasmaniensis (strain DSM 17950 / CFBP 7177 / CIP 109463 / NCPPB 4357 / Et1/99).